The chain runs to 496 residues: UDP-N-acetylmuramoylalanine--D-glutamate ligase (496 aa).

An ATP-binding site is contributed by 130-136 (GTNGKTT).

This sequence belongs to the MurCDEF family.

Its subcellular location is the cytoplasm. The enzyme catalyses UDP-N-acetyl-alpha-D-muramoyl-L-alanine + D-glutamate + ATP = UDP-N-acetyl-alpha-D-muramoyl-L-alanyl-D-glutamate + ADP + phosphate + H(+). It functions in the pathway cell wall biogenesis; peptidoglycan biosynthesis. Its function is as follows. Cell wall formation. Catalyzes the addition of glutamate to the nucleotide precursor UDP-N-acetylmuramoyl-L-alanine (UMA). In Mycobacterium tuberculosis (strain CDC 1551 / Oshkosh), this protein is UDP-N-acetylmuramoylalanine--D-glutamate ligase (murD).